A 988-amino-acid polypeptide reads, in one-letter code: Band 4.1-like protein 2 (988 aa).

The disordered stretch occupies residues 1–190 (MTTEVGSASE…GAAKRETKEV (190 aa)). T2 carries the N-acetylthreonine modification. S7 is subject to Phosphoserine. Basic and acidic residues predominate over residues 22–31 (ASKEKAKEVE). Residues S38, S86, and S116 each carry the phosphoserine modification. Composition is skewed to basic and acidic residues over residues 110-148 (ILGKEESLPEEESRAKGDAEEMAQRKHLEVQVEVREAKP) and 160-190 (EEVRKDKEETIQDTQEEKLEGGAAKRETKEV). A phosphoserine mark is found at S201, S379, S395, S492, S543, S555, S561, and S582. Residues 211-492 (VLAKVTLLDG…EHHTFYRLVS (282 aa)) enclose the FERM domain. Positions 495–651 (QPPKTKFLTL…TPEPRPSEWE (157 aa)) are hydrophilic. The tract at residues 514–594 (TQAQTREAST…KATPLPAEGK (81 aa)) is disordered. Over residues 555-567 (SPPGEGSVPGPGV) the composition is skewed to low complexity. Y606 is subject to Phosphotyrosine. A phosphoserine mark is found at S610 and S630. Disordered regions lie at residues 639–788 (MAST…QAGA) and 804–839 (QKLPGEKGAHGGTAEQDPREEAEEDPHRVNGEVPHL). Residues 652-837 (KRRVTPLPFQ…DPHRVNGEVP (186 aa)) are spectrin--actin-binding. Residues 673–686 (VEEKKRAEVGKDES) are compositionally biased toward basic and acidic residues. Residue S698 is modified to Phosphoserine. The span at 704–717 (GETRKVEPVAHKDS) shows a compositional bias: basic and acidic residues. A compositionally biased stretch (low complexity) spans 718–729 (TSLSSESSSSSS). Positions 739 to 751 (QPHHRVTEGTIRE) are enriched in basic and acidic residues. T745 bears the Phosphothreonine mark. Acidic residues predominate over residues 752-764 (EQEECDEELEEEP). The segment covering 828-839 (DPHRVNGEVPHL) has biased composition (basic and acidic residues). The interval 838 to 988 (HLDLDGLPEI…ETELAEEGEE (151 aa)) is C-terminal (CTD).

In terms of assembly, interacts with FCGR1A. Interacts with TRPC4. Interacts (via CTD domain) with FKBP2. Interacts with NUMA1; this interaction is negatively regulated by CDK1 during metaphase and promotes anaphase-specific localization of NUMA1 in symmetrically dividing cells. Widely expressed.

The protein resides in the cytoplasm. It is found in the cytoskeleton. The protein localises to the cell cortex. It localises to the cell membrane. Its function is as follows. Required for dynein-dynactin complex and NUMA1 recruitment at the mitotic cell cortex during anaphase. This Mus musculus (Mouse) protein is Band 4.1-like protein 2.